A 141-amino-acid polypeptide reads, in one-letter code: Alpha-lactalbumin (141 aa).

The signal sequence occupies residues 1–19 (MMSFVSLLVVGILFPAIQA). In terms of domain architecture, C-type lysozyme spans 20–141 (KQFTKCELSQ…KLDQWLCEKM (122 aa)). Cystine bridges form between Cys-25–Cys-138, Cys-47–Cys-129, Cys-80–Cys-95, and Cys-91–Cys-109. Ca(2+) contacts are provided by Lys-97, Asp-100, Asp-102, Asp-105, and Asp-106.

It belongs to the glycosyl hydrolase 22 family. Lactose synthase (LS) is a heterodimer of a catalytic component, beta1,4-galactosyltransferase (beta4Gal-T1) and a regulatory component, alpha-lactalbumin (LA). In terms of tissue distribution, mammary gland specific. Secreted in milk.

The protein resides in the secreted. Its function is as follows. Regulatory subunit of lactose synthase, changes the substrate specificity of galactosyltransferase in the mammary gland making glucose a good acceptor substrate for this enzyme. This enables LS to synthesize lactose, the major carbohydrate component of milk. In other tissues, galactosyltransferase transfers galactose onto the N-acetylglucosamine of the oligosaccharide chains in glycoproteins. The chain is Alpha-lactalbumin (LALBA) from Sus scrofa (Pig).